Here is a 575-residue protein sequence, read N- to C-terminus: DNA mismatch repair protein MutL (575 aa).

Belongs to the DNA mismatch repair MutL/HexB family.

Its function is as follows. This protein is involved in the repair of mismatches in DNA. It is required for dam-dependent methyl-directed DNA mismatch repair. May act as a 'molecular matchmaker', a protein that promotes the formation of a stable complex between two or more DNA-binding proteins in an ATP-dependent manner without itself being part of a final effector complex. The protein is DNA mismatch repair protein MutL of Dictyoglomus thermophilum (strain ATCC 35947 / DSM 3960 / H-6-12).